Here is a 91-residue protein sequence, read N- to C-terminus: uncharacterized protein (91 aa).

It is found in the plastid. Its subcellular location is the cyanelle. This is an uncharacterized protein from Cyanophora paradoxa.